The following is a 371-amino-acid chain: MNKLPHETRVVIGMSGGVDSSVAALLLKEQGYDVIGIFMKNWDDTDENGVCTATEDYNDVIEVCNQIGIPYYAVNFEKQYWDKVFTYFLDEYRAGRTPNPDVMCNKEIKFKAFLEHAIALGADYVATGHYARVAYMDGEYKMLRGVDDNKDQTYFLNQLSQEQLSKTMFPLGELKKPQIREMAKEAGLATAAKKDSTGICFIGERNFKDFLSNYLPAQPGVMQTLSGEVKGKHDGLMYYTIGQRHGLGIGGNGDPWFAVGKNLKENILYVDQGFHNELLYGDEVIATNVGWVSNEAKEKEFKCTAKFRYRQEDNKVTVQIVDENTVRILCDEPIRAITPGQAVVFYDGDECLGGATIDEVYRSGKKLDYLG.

ATP contacts are provided by residues Gly-13–Ser-20 and Met-39. The interaction with target base in tRNA stretch occupies residues Asn-99–Asp-101. Cys-104 serves as the catalytic Nucleophile. Cys-104 and Cys-200 are joined by a disulfide. Gly-128 lines the ATP pocket. Residues Lys-150–Gln-152 form an interaction with tRNA region. The Cysteine persulfide intermediate role is filled by Cys-200. The tract at residues Arg-308–Tyr-309 is interaction with tRNA.

It belongs to the MnmA/TRMU family.

It localises to the cytoplasm. The enzyme catalyses S-sulfanyl-L-cysteinyl-[protein] + uridine(34) in tRNA + AH2 + ATP = 2-thiouridine(34) in tRNA + L-cysteinyl-[protein] + A + AMP + diphosphate + H(+). Functionally, catalyzes the 2-thiolation of uridine at the wobble position (U34) of tRNA, leading to the formation of s(2)U34. This Bacillus thuringiensis (strain Al Hakam) protein is tRNA-specific 2-thiouridylase MnmA.